The chain runs to 588 residues: 2-succinyl-5-enolpyruvyl-6-hydroxy-3-cyclohexene-1-carboxylate synthase (588 aa).

The disordered stretch occupies residues 1 to 22 (MTTTGSLPAQPSSTSPRTGNPS).

The protein belongs to the TPP enzyme family. MenD subfamily. In terms of assembly, homodimer. Requires Mg(2+) as cofactor. It depends on Mn(2+) as a cofactor. Thiamine diphosphate is required as a cofactor.

The enzyme catalyses isochorismate + 2-oxoglutarate + H(+) = 5-enolpyruvoyl-6-hydroxy-2-succinyl-cyclohex-3-ene-1-carboxylate + CO2. The protein operates within quinol/quinone metabolism; 1,4-dihydroxy-2-naphthoate biosynthesis; 1,4-dihydroxy-2-naphthoate from chorismate: step 2/7. It participates in quinol/quinone metabolism; menaquinone biosynthesis. In terms of biological role, catalyzes the thiamine diphosphate-dependent decarboxylation of 2-oxoglutarate and the subsequent addition of the resulting succinic semialdehyde-thiamine pyrophosphate anion to isochorismate to yield 2-succinyl-5-enolpyruvyl-6-hydroxy-3-cyclohexene-1-carboxylate (SEPHCHC). The chain is 2-succinyl-5-enolpyruvyl-6-hydroxy-3-cyclohexene-1-carboxylate synthase from Clavibacter michiganensis subsp. michiganensis (strain NCPPB 382).